Reading from the N-terminus, the 334-residue chain is Phenylalanine--tRNA ligase alpha subunit (334 aa).

Glutamate 249 provides a ligand contact to Mg(2+).

Belongs to the class-II aminoacyl-tRNA synthetase family. Phe-tRNA synthetase alpha subunit type 1 subfamily. In terms of assembly, tetramer of two alpha and two beta subunits. Requires Mg(2+) as cofactor.

The protein localises to the cytoplasm. It carries out the reaction tRNA(Phe) + L-phenylalanine + ATP = L-phenylalanyl-tRNA(Phe) + AMP + diphosphate + H(+). This Desulfosudis oleivorans (strain DSM 6200 / JCM 39069 / Hxd3) (Desulfococcus oleovorans) protein is Phenylalanine--tRNA ligase alpha subunit.